The chain runs to 178 residues: Disulfide bond formation protein B (178 aa).

Residues 1-14 (MLSFFKTLSTKRSA) are Cytoplasmic-facing. The chain crosses the membrane as a helical span at residues 15–31 (WFLLFSSALLLEAIALY). Residues 32–49 (FQHGMGLAPCVMCIYERV) lie on the Periplasmic side of the membrane. The cysteines at positions 41 and 44 are disulfide-linked. Residues 50–65 (AILGIAFSGLLGLLYP) traverse the membrane as a helical segment. Topologically, residues 66 to 72 (SSMLLRL) are cytoplasmic. Residues 73–90 (VALLIGLSSAIKGLMISI) form a helical membrane-spanning segment. Residues 91 to 145 (THLDLQLYPAPWKQCSAVAEFPETLPLDQWFPALFLPSGSCSEVTWQFLGFSMVQ) lie on the Periplasmic side of the membrane. Cys105 and Cys131 are disulfide-bonded. A helical transmembrane segment spans residues 146-164 (WIVVIFALYTLLLALIFIS). Residues 165 to 177 (QVKRLKPKQRRLF) lie on the Cytoplasmic side of the membrane.

This sequence belongs to the DsbB family.

It localises to the cell inner membrane. Required for disulfide bond formation in some periplasmic proteins. Acts by oxidizing the DsbA protein. The chain is Disulfide bond formation protein B from Pasteurella multocida (strain Pm70).